The following is an 88-amino-acid chain: Putative membrane protein insertion efficiency factor (88 aa).

The segment at Leu65–His88 is disordered. The span at Pro69 to His80 shows a compositional bias: basic and acidic residues.

The protein belongs to the UPF0161 family.

The protein resides in the cell membrane. Its function is as follows. Could be involved in insertion of integral membrane proteins into the membrane. This Listeria innocua serovar 6a (strain ATCC BAA-680 / CLIP 11262) protein is Putative membrane protein insertion efficiency factor.